The primary structure comprises 277 residues: Proteasome subunit beta type-7 (277 aa).

Residues 1–43 (MAAVSVFQPPVGGFSFDNCRRNAVLEADFAKKGFKLPKARKTG) constitute a propeptide, removed in mature form. Threonine 44 acts as the Nucleophile in catalysis.

It belongs to the peptidase T1B family. In terms of assembly, the 26S proteasome consists of a 20S proteasome core and two 19S regulatory subunits. The 20S proteasome core is a barrel-shaped complex made of 28 subunits that are arranged in four stacked rings. The two outer rings are each formed by seven alpha subunits, and the two inner rings are formed by seven beta subunits. The proteolytic activity is exerted by three beta-subunits PSMB5, PSMB6 and PSMB7.

The protein localises to the cytoplasm. It localises to the nucleus. The catalysed reaction is Cleavage of peptide bonds with very broad specificity.. Component of the 20S core proteasome complex involved in the proteolytic degradation of most intracellular proteins. This complex plays numerous essential roles within the cell by associating with different regulatory particles. Associated with two 19S regulatory particles, forms the 26S proteasome and thus participates in the ATP-dependent degradation of ubiquitinated proteins. The 26S proteasome plays a key role in the maintenance of protein homeostasis by removing misfolded or damaged proteins that could impair cellular functions, and by removing proteins whose functions are no longer required. Associated with the PA200 or PA28, the 20S proteasome mediates ubiquitin-independent protein degradation. This type of proteolysis is required in several pathways including spermatogenesis (20S-PA200 complex) or generation of a subset of MHC class I-presented antigenic peptides (20S-PA28 complex). Within the 20S core complex, PSMB7 displays a trypsin-like activity. In Mus musculus (Mouse), this protein is Proteasome subunit beta type-7 (Psmb7).